Here is a 345-residue protein sequence, read N- to C-terminus: Calcium/calmodulin-dependent protein kinase type 1 (345 aa).

The segment at 1-23 is disordered; that stretch reads MPLFGSKKETAKKSSKKDKDEGK. Positions 31 to 287 constitute a Protein kinase domain; that stretch reads YILKDLLGTG…CKQALGHPWI (257 aa). ATP is bound by residues 37-45 and K61; that span reads LGTGAFSQV. Residue D153 is the Proton acceptor of the active site. An autoinhibitory domain region spans residues 287–327; that stretch reads ISGNAASTENIHSSVSEQLKKNFAKSRWRQAYHATAVIRQM. The segment at 307 to 328 is calmodulin-binding; it reads KNFAKSRWRQAYHATAVIRQMR.

The protein belongs to the protein kinase superfamily. CAMK Ser/Thr protein kinase family. CaMK subfamily. As to expression, highly expressed in hepatopancreas and to a lesser extent in gills. Low expression in hemocytes, testis, ovary, heart, eyestalk, muscle and epidermis.

The enzyme catalyses L-seryl-[protein] + ATP = O-phospho-L-seryl-[protein] + ADP + H(+). The catalysed reaction is L-threonyl-[protein] + ATP = O-phospho-L-threonyl-[protein] + ADP + H(+). Its activity is regulated as follows. Activated by Ca(2+)/calmodulin. Binding of calmodulin results in conformational change that relieves intrasteric autoinhibition. Calcium/calmodulin-dependent protein kinase that operates in the calcium-triggered CaMKK-CaMK1 signaling cascade and, upon calcium influx, regulates transcription activators activity, cell cycle, hormone production, cell differentiation, actin filament organization and neurite outgrowth. Involved in molting. The sequence is that of Calcium/calmodulin-dependent protein kinase type 1 from Macrobrachium nipponense (Oriental river shrimp).